Consider the following 1045-residue polypeptide: Extracellular serine protease (1045 aa).

The signal sequence occupies residues 1-27 (MILNKKLKLAYCVFLGCYGLSLHSSLA). Residues 49-396 (QWGLEAISAE…WGRVNLRDAI (348 aa)) enclose the Peptidase S8 domain. Catalysis depends on charge relay system residues aspartate 76, histidine 112, and serine 341. A propeptide spanning residues 646–1045 (SLASTENDKE…SVNAGLTWRF (400 aa)) is cleaved from the precursor. Positions 769 to 1045 (IKADDNGAWA…SVNAGLTWRF (277 aa)) constitute an Autotransporter domain.

The protein belongs to the peptidase S8 family.

It is found in the secreted. This is Extracellular serine protease from Serratia marcescens.